We begin with the raw amino-acid sequence, 717 residues long: Cleavage stimulation factor subunit 3 (717 aa).

N-acetylserine is present on serine 2. 9 HAT repeats span residues 45 to 77, 79 to 110, 117 to 152, 163 to 196, 221 to 261, 271 to 303, 319 to 352, 354 to 387, and 458 to 494; these read QPID…AEIK, KNYD…YVRE, SYKE…FLKG, QRIT…YEEG, KEYE…WEKS, LITK…YLEQ, LFSD…YEES, MKYE…FARR, and NEDN…FESN. The tract at residues 684-705 is disordered; the sequence is VKRPNEDSDEDEEKGAVVPPVH. Serine 691 carries the post-translational modification Phosphoserine.

As to quaternary structure, homodimer. The CSTF complex is composed of CSTF1 (50 kDa subunit), CSTF2 (64 kDa subunit) and CSTF3 (77 kDa subunit). CSTF3 directly interacts with CSTF1 and CSTF2. Interacts with FIP1L1.

It localises to the nucleus. Its function is as follows. One of the multiple factors required for polyadenylation and 3'-end cleavage of mammalian pre-mRNAs. In Pongo abelii (Sumatran orangutan), this protein is Cleavage stimulation factor subunit 3 (CSTF3).